Reading from the N-terminus, the 179-residue chain is Ribosome maturation factor RimP (179 aa).

This sequence belongs to the RimP family.

The protein localises to the cytoplasm. Its function is as follows. Required for maturation of 30S ribosomal subunits. This Prosthecochloris aestuarii (strain DSM 271 / SK 413) protein is Ribosome maturation factor RimP.